The following is a 145-amino-acid chain: D-aminoacyl-tRNA deacylase (145 aa).

Residues 137 to 138 carry the Gly-cisPro motif, important for rejection of L-amino acids motif; sequence GP.

It belongs to the DTD family. Homodimer.

The protein resides in the cytoplasm. It catalyses the reaction glycyl-tRNA(Ala) + H2O = tRNA(Ala) + glycine + H(+). The enzyme catalyses a D-aminoacyl-tRNA + H2O = a tRNA + a D-alpha-amino acid + H(+). In terms of biological role, an aminoacyl-tRNA editing enzyme that deacylates mischarged D-aminoacyl-tRNAs. Also deacylates mischarged glycyl-tRNA(Ala), protecting cells against glycine mischarging by AlaRS. Acts via tRNA-based rather than protein-based catalysis; rejects L-amino acids rather than detecting D-amino acids in the active site. By recycling D-aminoacyl-tRNA to D-amino acids and free tRNA molecules, this enzyme counteracts the toxicity associated with the formation of D-aminoacyl-tRNA entities in vivo and helps enforce protein L-homochirality. The protein is D-aminoacyl-tRNA deacylase of Serratia proteamaculans (strain 568).